The sequence spans 173 residues: Flavodoxin 2 (173 aa).

Residues 3–165 enclose the Flavodoxin-like domain; sequence MGLFYGSSTC…RIQTWCEQIL (163 aa).

Belongs to the flavodoxin family. The cofactor is FMN.

Its function is as follows. Low-potential electron donor to a number of redox enzymes. The chain is Flavodoxin 2 (fldB) from Salmonella typhi.